A 365-amino-acid chain; its full sequence is NAC domain-containing protein 37 (365 aa).

The 150-residue stretch at 9–158 (VPPGFRFHPT…GWVVCRAFKK (150 aa)) folds into the NAC domain. Residues 109 to 164 (IGMRKTLVFYKGRAPNGKKSDWIMHEYRLESDENAPPQEEGWVVCRAFKKRATGQA) mediate DNA binding.

Belongs to the plant vascular related NAC-domain protein family. As to quaternary structure, interacts with NAC030/VND7. In terms of tissue distribution, expressed in root metaxylem pole and in shoot pre-procambium and procambium. Present in root developing xylems. Specifically expressed in vessels but not in interfascicular fibers in stems.

The protein resides in the nucleus. In terms of biological role, transcription activator that binds to the secondary wall NAC binding element (SNBE), 5'-(T/A)NN(C/T)(T/C/G)TNNNNNNNA(A/C)GN(A/C/T)(A/T)-3', in the promoter of target genes. Involved in xylem formation by promoting the expression of secondary wall-associated transcription factors and of genes involved in secondary wall biosynthesis and programmed cell death, genes driven by the secondary wall NAC binding element (SNBE). Triggers thickening of secondary walls. The sequence is that of NAC domain-containing protein 37 from Arabidopsis thaliana (Mouse-ear cress).